Here is a 310-residue protein sequence, read N- to C-terminus: Methionyl-tRNA formyltransferase (310 aa).

Position 109 to 112 (109 to 112) interacts with (6S)-5,6,7,8-tetrahydrofolate; sequence SLLP.

This sequence belongs to the Fmt family.

The enzyme catalyses L-methionyl-tRNA(fMet) + (6R)-10-formyltetrahydrofolate = N-formyl-L-methionyl-tRNA(fMet) + (6S)-5,6,7,8-tetrahydrofolate + H(+). Its function is as follows. Attaches a formyl group to the free amino group of methionyl-tRNA(fMet). The formyl group appears to play a dual role in the initiator identity of N-formylmethionyl-tRNA by promoting its recognition by IF2 and preventing the misappropriation of this tRNA by the elongation apparatus. The chain is Methionyl-tRNA formyltransferase from Staphylococcus epidermidis (strain ATCC 35984 / DSM 28319 / BCRC 17069 / CCUG 31568 / BM 3577 / RP62A).